Reading from the N-terminus, the 338-residue chain is Nodulation outer protein L (338 aa).

Residues 1-14 (MDINSTSPLNASPQ) are compositionally biased toward polar residues. Disordered regions lie at residues 1 to 48 (MDIN…LPQV), 85 to 158 (TRER…DLET), 187 to 209 (SPAP…PHAR), and 230 to 259 (PQAG…SSAG). The segment covering 85–97 (TRERSPHPSEQRP) has biased composition (basic and acidic residues). Residues 126–138 (VGPSRSGPSQAGL) show a composition bias toward polar residues. A compositionally biased stretch (polar residues) spans 242–258 (SGPSQARPSHAWPSSSA).

The protein resides in the secreted. Functionally, putative symbiotic effector that modulates nodulation in legumes. When delivered into the plant cell, modulates the activity of signal transduction pathways that culminate in activation of PR proteins. The polypeptide is Nodulation outer protein L (nopL) (Sinorhizobium fredii (strain NBRC 101917 / NGR234)).